We begin with the raw amino-acid sequence, 235 residues long: Elongation factor Tu, chloroplastic (235 aa).

A tr-type G domain is found at 1 to 125 (KNMITGAAQM…AVDSYIPTPE (125 aa)). 47-50 (NKED) is a binding site for GTP.

The protein belongs to the TRAFAC class translation factor GTPase superfamily. Classic translation factor GTPase family. EF-Tu/EF-1A subfamily.

It localises to the plastid. The protein resides in the chloroplast. The catalysed reaction is GTP + H2O = GDP + phosphate + H(+). Functionally, GTP hydrolase that promotes the GTP-dependent binding of aminoacyl-tRNA to the A-site of ribosomes during protein biosynthesis. This Mantoniella squamata (Unicellular alga) protein is Elongation factor Tu, chloroplastic (tufA).